A 376-amino-acid polypeptide reads, in one-letter code: Nuclear hormone receptor family member nhr-124 (376 aa).

A DNA-binding region (nuclear receptor) is located at residues proline 11–glutamate 89. 2 consecutive NR C4-type zinc fingers follow at residues cysteine 14 to cysteine 34 and cysteine 50 to cysteine 72. The NR LBD domain occupies histidine 125–arginine 371.

The protein belongs to the nuclear hormone receptor family.

Its subcellular location is the nucleus. Functionally, orphan nuclear receptor. The chain is Nuclear hormone receptor family member nhr-124 (nhr-124) from Caenorhabditis elegans.